Consider the following 104-residue polypeptide: Large ribosomal subunit protein uL24 (104 aa).

Belongs to the universal ribosomal protein uL24 family. Part of the 50S ribosomal subunit.

In terms of biological role, one of two assembly initiator proteins, it binds directly to the 5'-end of the 23S rRNA, where it nucleates assembly of the 50S subunit. Its function is as follows. One of the proteins that surrounds the polypeptide exit tunnel on the outside of the subunit. This Halothermothrix orenii (strain H 168 / OCM 544 / DSM 9562) protein is Large ribosomal subunit protein uL24.